Consider the following 143-residue polypeptide: uncharacterized protein (143 aa).

The next 2 helical transmembrane spans lie at 20 to 39 (FKYCSTSLFVLILFNSWITV) and 113 to 135 (YFSLQISLSFAFSGICVKYITGL).

It is found in the membrane. This is an uncharacterized protein from Saccharomyces cerevisiae (strain ATCC 204508 / S288c) (Baker's yeast).